The chain runs to 251 residues: Ly6/PLAUR domain-containing protein 5 (251 aa).

The signal sequence occupies residues 1–25 (MAMGVPRVILLCLFGAALCLTGSQA). N-linked (GlcNAc...) asparagine glycans are attached at residues Asn120 and Asn174. The 80-residue stretch at 135 to 214 (CYACIGVHQD…GSCCEGYLCN (80 aa)) folds into the UPAR/Ly6 domain. A lipid anchor (GPI-anchor amidated alanine) is attached at Ala225. The propeptide at 226–251 (SATTPPRALQVLALLLPVLLLVGLSA) is removed in mature form.

The protein localises to the cell membrane. This is Ly6/PLAUR domain-containing protein 5 (LYPD5) from Homo sapiens (Human).